We begin with the raw amino-acid sequence, 190 residues long: Glutathione peroxidase 2 (190 aa).

Residue Sec40 is part of the active site. A non-standard amino acid (selenocysteine) is located at residue Sec40.

It belongs to the glutathione peroxidase family. In terms of assembly, homotetramer. As to expression, mucosal epithelium of the gastrointestinal tract.

It localises to the cytoplasm. The protein localises to the cytosol. The catalysed reaction is 2 glutathione + H2O2 = glutathione disulfide + 2 H2O. The enzyme catalyses a hydroperoxy polyunsaturated fatty acid + 2 glutathione = a hydroxy polyunsaturated fatty acid + glutathione disulfide + H2O. It carries out the reaction tert-butyl hydroperoxide + 2 glutathione = tert-butanol + glutathione disulfide + H2O. It catalyses the reaction cumene hydroperoxide + 2 glutathione = 2-phenylpropan-2-ol + glutathione disulfide + H2O. The catalysed reaction is (13S)-hydroperoxy-(9Z,11E)-octadecadienoate + 2 glutathione = (13S)-hydroxy-(9Z,11E)-octadecadienoate + glutathione disulfide + H2O. The enzyme catalyses (5S)-hydroperoxy-(6E,8Z,11Z,14Z)-eicosatetraenoate + 2 glutathione = (5S)-hydroxy-(6E,8Z,11Z,14Z)-eicosatetraenoate + glutathione disulfide + H2O. It carries out the reaction (12R)-hydroperoxy-(5Z,8Z,10E,14Z)-eicosatetraenoate + 2 glutathione = (12R)-hydroxy-(5Z,8Z,10E,14Z)-eicosatetraenoate + glutathione disulfide + H2O. It catalyses the reaction (15S)-hydroperoxy-(5Z,8Z,11Z,13E)-eicosatetraenoate + 2 glutathione = (15S)-hydroxy-(5Z,8Z,11Z,13E)-eicosatetraenoate + glutathione disulfide + H2O. Its function is as follows. Catalyzes the reduction of hydroperoxides in a glutathione-dependent manner thus regulating cellular redox homeostasis. Can reduce small soluble hydroperoxide such as H2O2. Can reduce cumene hydroperoxide and tert-butyl hydroperoxide, as well as several fatty acid-derived hydroperoxides. Cannot reduce phosphatidycholine hydroperoxide. The protein is Glutathione peroxidase 2 (Gpx2) of Rattus norvegicus (Rat).